Reading from the N-terminus, the 363-residue chain is S-adenosylmethionine:tRNA ribosyltransferase-isomerase (363 aa).

It belongs to the QueA family. In terms of assembly, monomer.

Its subcellular location is the cytoplasm. The enzyme catalyses 7-aminomethyl-7-carbaguanosine(34) in tRNA + S-adenosyl-L-methionine = epoxyqueuosine(34) in tRNA + adenine + L-methionine + 2 H(+). It functions in the pathway tRNA modification; tRNA-queuosine biosynthesis. Functionally, transfers and isomerizes the ribose moiety from AdoMet to the 7-aminomethyl group of 7-deazaguanine (preQ1-tRNA) to give epoxyqueuosine (oQ-tRNA). This is S-adenosylmethionine:tRNA ribosyltransferase-isomerase from Pasteurella multocida (strain Pm70).